The sequence spans 589 residues: Cysteine/serine-rich nuclear protein 1 (589 aa).

2 disordered regions span residues 1 to 62 (MTGL…RDFC) and 309 to 388 (FREL…GVDD). Low complexity-rich tracts occupy residues 17–41 (SSVSSSSSSSGCQSRSCSPSSSVSR) and 345–368 (DNSCSSDMTDSSTASSSASGTSEA).

The protein belongs to the AXUD1 family. As to expression, ubiquitous. Most abundantly expressed in lung, placenta, skeletal muscle, pancreas and leukocyte. Frequently down-regulated in lung, kidney, liver and colon cancers compared with their corresponding normal tissues.

The protein resides in the nucleus. Its function is as follows. Binds to the consensus sequence 5'-AGAGTG-3' and has transcriptional activator activity. May have a tumor-suppressor function. May play a role in apoptosis. The polypeptide is Cysteine/serine-rich nuclear protein 1 (CSRNP1) (Homo sapiens (Human)).